Reading from the N-terminus, the 318-residue chain is Isoflavone reductase (318 aa).

NADP(+) contacts are provided by residues 11–17, arginine 36, and lysine 44; that span reads GATGAIG. Lysine 144 (proton acceptor) is an active-site residue. An NADP(+)-binding site is contributed by arginine 148.

Belongs to the NmrA-type oxidoreductase family. Isoflavone reductase subfamily.

The enzyme catalyses (3R)-vestitone + NADP(+) = 2'-hydroxyformononetin + NADPH + 2 H(+). It functions in the pathway phytoalexin biosynthesis; pterocarpan phytoalexin biosynthesis. Reduces achiral isoflavones to chiral isoflavanones during the biosynthesis of chiral pterocarpan phytoalexins. The reduction product (sophrol) is a third isomer, which represents the penultimate intermediate in the synthesis of the phytoalexin (+)-pisatin, the major phytoalexin in pea. This is Isoflavone reductase (IFR) from Pisum sativum (Garden pea).